Reading from the N-terminus, the 318-residue chain is Taste receptor type 2 member 60 (318 aa).

The Extracellular segment spans residues 1 to 7 (MNGDHMV). Residues 8–28 (LGSSVTDKKAIILVTILLLLR) traverse the membrane as a helical segment. The Cytoplasmic portion of the chain corresponds to 29-40 (LVAIAGNGFITA). The chain crosses the membrane as a helical span at residues 41–61 (ALGVEWVLRRMLLPCDKLLVS). The Extracellular segment spans residues 62 to 88 (LGASHFCLQSVVMGKTIYVFLYPMAFP). Residues 89-109 (YNPVLQFLAFQWDFLNAATLW) form a helical membrane-spanning segment. Over 110–128 (FSTWLSVFYCVKIATFTHP) the chain is Cytoplasmic. The helical transmembrane segment at 129–149 (VFFWLKHKLSGWLPWMIFSYV) threads the bilayer. At 150-183 (GLSSFTTILFFIGNHRMYQNYLKNHLQPWNVTGN) the chain is on the extracellular side. Asn179 carries an N-linked (GlcNAc...) asparagine glycan. The chain crosses the membrane as a helical span at residues 184–204 (SIRSYCEKFYLFPLKMITWTM). Over 205–234 (PTAVFFICMILLITSLGRHMKKALLTTSGF) the chain is Cytoplasmic. The helical transmembrane segment at 235-255 (REPSVQAHIKALLALLSFAML) threads the bilayer. Topologically, residues 256–264 (FISYFLSLV) are extracellular. A helical membrane pass occupies residues 265–285 (FSAAGIFPPLDFKFWVWESVI). Over 286–318 (YLCAAVHPIILLFSNCRLRAVLKSRRSSRCGTP) the chain is Cytoplasmic.

Belongs to the G-protein coupled receptor T2R family.

The protein resides in the membrane. In terms of biological role, receptor that may play a role in the perception of bitterness and is gustducin-linked. May play a role in sensing the chemical composition of the gastrointestinal content. The activity of this receptor may stimulate alpha gustducin, mediate PLC-beta-2 activation and lead to the gating of TRPM5. The sequence is that of Taste receptor type 2 member 60 (TAS2R60) from Pan paniscus (Pygmy chimpanzee).